The following is a 725-amino-acid chain: IML2-like protein SCY_3392 (725 aa).

At threonine 196 the chain carries Phosphothreonine. Serine 246, serine 377, and serine 380 each carry phosphoserine.

The protein belongs to the IML2 family.

It is found in the cytoplasm. The protein localises to the nucleus. In terms of biological role, may be involved in mitochondrial DNA stability. The polypeptide is IML2-like protein SCY_3392 (Saccharomyces cerevisiae (strain YJM789) (Baker's yeast)).